The following is a 156-amino-acid chain: Oxidized purine nucleoside triphosphate hydrolase (156 aa).

The 130-residue stretch at 3–132 (TSKLLTLVLV…WFPLMLQKKR (130 aa)) folds into the Nudix hydrolase domain. Thr-8 serves as a coordination point for 2-oxo-dATP. O(6)-methyl-dGMP is bound by residues Thr-8, Lys-23, Asn-33, and 35–38 (FGGK). Residue Lys-23 coordinates 8-oxo-dGTP. Residues Asn-33 and 35-38 (FGGK) contribute to the 2-oxo-dATP site. 5 residues coordinate Mg(2+): Gly-36, Glu-52, Glu-55, Glu-56, and Glu-100. Residues 37–58 (GKVQTGETIEQAARRELLEESG) carry the Nudix box motif. Residue 117 to 120 (WADD) coordinates 2-oxo-dATP. Position 117-120 (117-120 (WADD)) interacts with O(6)-methyl-dGMP.

It belongs to the Nudix hydrolase family. Monomer. It depends on Mg(2+) as a cofactor.

Its subcellular location is the cytoplasm. It localises to the cytosol. It is found in the mitochondrion matrix. The protein resides in the nucleus. It carries out the reaction 2-oxo-dATP + H2O = 2-oxo-dAMP + diphosphate + H(+). The catalysed reaction is 2-oxo-ATP + H2O = 2-oxo-AMP + diphosphate + H(+). The enzyme catalyses 8-oxo-dGTP + H2O = 8-oxo-dGMP + diphosphate + H(+). It catalyses the reaction 8-oxo-dATP + H2O = 8-oxo-dAMP + diphosphate + H(+). It carries out the reaction O(6)-methyl-dGTP + H2O = O(6)-methyl-dGMP + diphosphate + H(+). The catalysed reaction is N(6)-methyl-dATP + H2O = N(6)-methyl-dAMP + diphosphate + H(+). The enzyme catalyses N(6)-methyl-ATP + H2O = N(6)-methyl-AMP + diphosphate + H(+). Inhibited by TH588. Oxidized purine nucleoside triphosphate hydrolase which is a prominent sanitizer of the oxidized nucleotide pool. Catalyzes the hydrolysis of 2-oxo-dATP (2-hydroxy-dATP) into 2-oxo-dAMP. Also has a significant hydrolase activity toward 2-oxo-ATP, 8-oxo-dGTP and 8-oxo-dATP. Through the hydrolysis of oxidized purine nucleoside triphosphates, prevents their incorporation into DNA and the subsequent transversions A:T to C:G and G:C to T:A. Also catalyzes the hydrolysis of methylated purine nucleoside triphosphate preventing their integration into DNA. Through this antimutagenic activity protects cells from oxidative stress. The polypeptide is Oxidized purine nucleoside triphosphate hydrolase (nudt1) (Danio rerio (Zebrafish)).